A 184-amino-acid chain; its full sequence is GTP cyclohydrolase 1 (184 aa).

Positions 75, 78, and 146 each coordinate Zn(2+).

The protein belongs to the GTP cyclohydrolase I family. Homomer.

It carries out the reaction GTP + H2O = 7,8-dihydroneopterin 3'-triphosphate + formate + H(+). Its pathway is cofactor biosynthesis; 7,8-dihydroneopterin triphosphate biosynthesis; 7,8-dihydroneopterin triphosphate from GTP: step 1/1. The polypeptide is GTP cyclohydrolase 1 (Teredinibacter turnerae (strain ATCC 39867 / T7901)).